The primary structure comprises 412 residues: CCA-adding enzyme (412 aa).

2 residues coordinate ATP: Gly8 and Arg11. 2 residues coordinate CTP: Gly8 and Arg11. Mg(2+) is bound by residues Asp21 and Asp23. 3 residues coordinate ATP: Arg91, Arg137, and Arg140. The CTP site is built by Arg91, Arg137, and Arg140.

This sequence belongs to the tRNA nucleotidyltransferase/poly(A) polymerase family. Bacterial CCA-adding enzyme type 2 subfamily. The cofactor is Mg(2+).

The catalysed reaction is a tRNA precursor + 2 CTP + ATP = a tRNA with a 3' CCA end + 3 diphosphate. It catalyses the reaction a tRNA with a 3' CCA end + 2 CTP + ATP = a tRNA with a 3' CCACCA end + 3 diphosphate. In terms of biological role, catalyzes the addition and repair of the essential 3'-terminal CCA sequence in tRNAs without using a nucleic acid template. Adds these three nucleotides in the order of C, C, and A to the tRNA nucleotide-73, using CTP and ATP as substrates and producing inorganic pyrophosphate. tRNA 3'-terminal CCA addition is required both for tRNA processing and repair. Also involved in tRNA surveillance by mediating tandem CCA addition to generate a CCACCA at the 3' terminus of unstable tRNAs. While stable tRNAs receive only 3'-terminal CCA, unstable tRNAs are marked with CCACCA and rapidly degraded. The sequence is that of CCA-adding enzyme from Buchnera aphidicola subsp. Schizaphis graminum (strain Sg).